The following is a 426-amino-acid chain: Amino acid transporter AVT1H (426 aa).

The next 11 helical transmembrane spans lie at 34-54 (SFLH…QLSM), 55-75 (PYAV…FGIL), 110-130 (LIVC…YTIS), 148-168 (HFPA…SLWI), 182-202 (ILMS…GGVI), 215-235 (IPTV…FPNL), 248-268 (VSIV…ITGA), 292-312 (IALW…FAPL), 340-360 (LLLV…VLSL), 363-383 (SLVS…KICW), and 392-412 (AANL…SFES).

The protein belongs to the amino acid/polyamine transporter 2 family. Amino acid/auxin permease (AAAP) (TC 2.A.18.5) subfamily.

Its subcellular location is the membrane. In Arabidopsis thaliana (Mouse-ear cress), this protein is Amino acid transporter AVT1H.